The following is a 1316-amino-acid chain: DNA-directed RNA polymerase subunit beta' (1316 aa).

Zn(2+) contacts are provided by Cys-60, Cys-62, Cys-75, and Cys-78. The tract at residues 183-209 is disordered; sequence ELEEEGAKSDVRRKVRDGGEREMRQLR. Mg(2+)-binding residues include Asp-535, Asp-537, and Asp-539. Zn(2+) contacts are provided by Cys-890, Cys-966, Cys-973, and Cys-976.

Belongs to the RNA polymerase beta' chain family. In terms of assembly, the RNAP catalytic core consists of 2 alpha, 1 beta, 1 beta' and 1 omega subunit. When a sigma factor is associated with the core the holoenzyme is formed, which can initiate transcription. The cofactor is Mg(2+). It depends on Zn(2+) as a cofactor.

The catalysed reaction is RNA(n) + a ribonucleoside 5'-triphosphate = RNA(n+1) + diphosphate. In terms of biological role, DNA-dependent RNA polymerase catalyzes the transcription of DNA into RNA using the four ribonucleoside triphosphates as substrates. This is DNA-directed RNA polymerase subunit beta' from Mycolicibacterium gilvum (strain PYR-GCK) (Mycobacterium gilvum (strain PYR-GCK)).